Consider the following 509-residue polypeptide: Probable cytochrome P450 4ac1 (509 aa).

Heme contacts are provided by Glu317 and Cys454.

It belongs to the cytochrome P450 family. Heme serves as cofactor.

The protein resides in the endoplasmic reticulum membrane. Its subcellular location is the microsome membrane. Its function is as follows. May be involved in the metabolism of insect hormones and in the breakdown of synthetic insecticides. The polypeptide is Probable cytochrome P450 4ac1 (Cyp4ac1) (Drosophila melanogaster (Fruit fly)).